The sequence spans 195 residues: Peptidyl-tRNA hydrolase (195 aa).

TRNA is bound at residue tyrosine 17. The active-site Proton acceptor is histidine 22. TRNA contacts are provided by tyrosine 68, asparagine 70, and asparagine 116.

Belongs to the PTH family. Monomer.

Its subcellular location is the cytoplasm. It carries out the reaction an N-acyl-L-alpha-aminoacyl-tRNA + H2O = an N-acyl-L-amino acid + a tRNA + H(+). Hydrolyzes ribosome-free peptidyl-tRNAs (with 1 or more amino acids incorporated), which drop off the ribosome during protein synthesis, or as a result of ribosome stalling. Functionally, catalyzes the release of premature peptidyl moieties from peptidyl-tRNA molecules trapped in stalled 50S ribosomal subunits, and thus maintains levels of free tRNAs and 50S ribosomes. The sequence is that of Peptidyl-tRNA hydrolase from Shewanella sp. (strain MR-4).